The chain runs to 1007 residues: Inversin-A (1007 aa).

16 ANK repeats span residues Ser9–Gln39, Leu43–His72, Ser76–His105, Arg109–Ala140, Arg144–Ile173, Glu177–Leu209, Glu216–Pro246, Leu250–Ile279, Gln284–Glu313, Glu317–Val346, Tyr352–Ala381, Met385–Leu414, Asp418–Ala447, Glu451–Ile480, Asn484–Gln513, and Glu519–Ala549. A D-box 1 motif is present at residues Arg486–Asn494. Residues Gln551–Lys580 enclose the IQ 1 domain. Composition is skewed to basic and acidic residues over residues Arg585–Gln599 and Gly608–Glu652. 2 disordered regions span residues Arg585 to Ser837 and Ser868 to Lys893. Positions Ile684–Met701 are enriched in polar residues. Over residues Ser702 to Ser712 the composition is skewed to low complexity. Residues Asn727 to Ser745 are compositionally biased toward polar residues. Over residues His751 to Lys771 the composition is skewed to basic and acidic residues. The segment covering Gly772 to Leu784 has biased composition (basic residues). Polar residues predominate over residues Lys870–Lys893. A D-box 2 motif is present at residues Arg964–Lys972. In terms of domain architecture, IQ 2 spans Lys971 to Arg1000.

Interacts with apc2. Binds calmodulin.

The protein resides in the cytoplasm. Its subcellular location is the cytoskeleton. In terms of biological role, required for normal renal development and establishment of left-right axis. Probably acts as a molecular switch between different Wnt signaling pathways. Inhibits the canonical Wnt pathway by targeting cytoplasmic disheveled for degradation by the ubiquitin-proteasome. This suggests that it is required in renal development to oppose the repression of terminal differentiation of tubular epithelial cells by Wnt signaling. Plays a central role in convergent extension movements in gastrulating embryos, a processus regulated by Wnt signaling. The sequence is that of Inversin-A (invs-a) from Xenopus laevis (African clawed frog).